A 428-amino-acid polypeptide reads, in one-letter code: Putative POM121-like protein 1 (428 aa).

Disordered stretches follow at residues 1 to 23 (MDSL…RLSP), 36 to 204 (KESG…KFPL), 254 to 293 (DCRP…HKSQ), 306 to 384 (TEVP…PSTL), and 402 to 428 (GPQP…SCPK). Residues 44–62 (EQDKDPRVQENPGDQRRVP) show a composition bias toward basic and acidic residues. Residues 106–117 (QTSQTSWTSSCT) show a composition bias toward low complexity. Polar residues-rich tracts occupy residues 118-129 (NRNAISSSYSST), 144-155 (SHCQLTLSSSKT), 260-269 (PSHTLSSLAT), 326-347 (FSSS…QVTS), and 403-415 (PQPQ…RGQN). The segment covering 416–428 (QRSQTSRTSSCPK) has biased composition (low complexity).

Belongs to the POM121 family.

In Homo sapiens (Human), this protein is Putative POM121-like protein 1 (POM121L1P).